The sequence spans 1800 residues: U3 small nucleolar RNA-associated protein 10 (1800 aa).

HEAT repeat units follow at residues 426-467 (FTQS…TTPA) and 581-619 (DVDL…LYKK). The next 2 helical transmembrane spans lie at 944-964 (IQSG…AIVN) and 1000-1020 (ALLL…HSVM). HEAT repeat units follow at residues 1043–1081 (DQTI…AFEH), 1250–1288 (TLSL…QNPE), 1294–1333 (QHRM…KYGR), and 1755–1793 (LALL…VLGE).

Belongs to the HEATR1/UTP10 family. In terms of assembly, component of the ribosomal small subunit (SSU) processome.

It is found in the nucleus. The protein resides in the nucleolus. It localises to the membrane. In terms of biological role, involved in nucleolar processing of pre-18S ribosomal RNA. Involved in ribosome biosynthesis. The protein is U3 small nucleolar RNA-associated protein 10 of Aspergillus niger (strain ATCC MYA-4892 / CBS 513.88 / FGSC A1513).